A 247-amino-acid chain; its full sequence is Carboxy-S-adenosyl-L-methionine synthase (247 aa).

Residues Y40, 65–67, 90–91, 122–123, N137, and R204 each bind S-adenosyl-L-methionine; these read GAS, DN, and DI.

The protein belongs to the class I-like SAM-binding methyltransferase superfamily. Cx-SAM synthase family. As to quaternary structure, homodimer.

It carries out the reaction prephenate + S-adenosyl-L-methionine = carboxy-S-adenosyl-L-methionine + 3-phenylpyruvate + H2O. Its function is as follows. Catalyzes the conversion of S-adenosyl-L-methionine (SAM) to carboxy-S-adenosyl-L-methionine (Cx-SAM). The polypeptide is Carboxy-S-adenosyl-L-methionine synthase (Pseudomonas putida (strain GB-1)).